We begin with the raw amino-acid sequence, 79 residues long: DNA-directed RNA polymerase subunit omega (79 aa).

The protein belongs to the RNA polymerase subunit omega family. As to quaternary structure, the RNAP catalytic core consists of 2 alpha, 1 beta, 1 beta' and 1 omega subunit. When a sigma factor is associated with the core the holoenzyme is formed, which can initiate transcription.

The enzyme catalyses RNA(n) + a ribonucleoside 5'-triphosphate = RNA(n+1) + diphosphate. In terms of biological role, promotes RNA polymerase assembly. Latches the N- and C-terminal regions of the beta' subunit thereby facilitating its interaction with the beta and alpha subunits. The sequence is that of DNA-directed RNA polymerase subunit omega from Bdellovibrio bacteriovorus (strain ATCC 15356 / DSM 50701 / NCIMB 9529 / HD100).